Here is a 582-residue protein sequence, read N- to C-terminus: 2-succinyl-5-enolpyruvyl-6-hydroxy-3-cyclohexene-1-carboxylate synthase (582 aa).

It belongs to the TPP enzyme family. MenD subfamily. In terms of assembly, homodimer. Mg(2+) is required as a cofactor. Requires Mn(2+) as cofactor. The cofactor is thiamine diphosphate.

It carries out the reaction isochorismate + 2-oxoglutarate + H(+) = 5-enolpyruvoyl-6-hydroxy-2-succinyl-cyclohex-3-ene-1-carboxylate + CO2. It participates in quinol/quinone metabolism; 1,4-dihydroxy-2-naphthoate biosynthesis; 1,4-dihydroxy-2-naphthoate from chorismate: step 2/7. Its pathway is cofactor biosynthesis; phylloquinone biosynthesis. In terms of biological role, catalyzes the thiamine diphosphate-dependent decarboxylation of 2-oxoglutarate and the subsequent addition of the resulting succinic semialdehyde-thiamine pyrophosphate anion to isochorismate to yield 2-succinyl-5-enolpyruvyl-6-hydroxy-3-cyclohexene-1-carboxylate (SEPHCHC). This is 2-succinyl-5-enolpyruvyl-6-hydroxy-3-cyclohexene-1-carboxylate synthase from Trichodesmium erythraeum (strain IMS101).